A 193-amino-acid polypeptide reads, in one-letter code: Protein B4 (193 aa).

Helical transmembrane passes span Phe-15 to Phe-35, Cys-36 to Val-56, and Leu-160 to Ser-180.

It is found in the host membrane. In Homo sapiens (Human), this protein is Protein B4 (B4).